A 94-amino-acid chain; its full sequence is Large ribosomal subunit protein bL27 (94 aa).

Positions 1-9 (MLKLNLQFF) are excised as a propeptide.

The protein belongs to the bacterial ribosomal protein bL27 family. The N-terminus is cleaved by ribosomal processing cysteine protease Prp.

In Staphylococcus haemolyticus (strain JCSC1435), this protein is Large ribosomal subunit protein bL27.